A 468-amino-acid polypeptide reads, in one-letter code: MKLPHELGPIHFIGIGGIGMSGIAEVLINLGYSVQGSDAAENANVLRLRRKGAIIHIGHRADNLGDAEVVVVSTAIKRNNPELAYARELRLPVVRRAEMLAELMRLKQCVAIAGTHGKTTTTSLVATLLEAGGFDPTVINGGIINAYGTNSRLGAGDWMVVEADESDGTFLKLPADVAIITNIDPEHLDHFGTFENIRKAFRSFVENIPFYGFAVMCLDHPTVQELVGQIEDRRVITYGENPHADVRLVDIDLAGGMSRFSVVVRDRKSGGETVIEKILMPMPGLHNALNATAAIAVAHQLGMSPDQIRGALAGFGGVKRRFTRTGEWNGAIVFDDYAHHPVEIAAVLKAARASTKGRVIAIVQPHRYTRLHSLFNEFAACFNDADAVIVADVYPAGEAPIEGADRDGLVAAIKARGHRLAMPLARPADLSRLVRQLARPGDYIVLLGAGNITQWAYALPGELAASAA.

114–120 (GTHGKTT) contacts ATP.

The protein belongs to the MurCDEF family.

The protein resides in the cytoplasm. It carries out the reaction UDP-N-acetyl-alpha-D-muramate + L-alanine + ATP = UDP-N-acetyl-alpha-D-muramoyl-L-alanine + ADP + phosphate + H(+). It functions in the pathway cell wall biogenesis; peptidoglycan biosynthesis. Cell wall formation. The polypeptide is UDP-N-acetylmuramate--L-alanine ligase (Methylocella silvestris (strain DSM 15510 / CIP 108128 / LMG 27833 / NCIMB 13906 / BL2)).